We begin with the raw amino-acid sequence, 84 residues long: Large ribosomal subunit protein bL31B (84 aa).

This sequence belongs to the bacterial ribosomal protein bL31 family. Type B subfamily. In terms of assembly, part of the 50S ribosomal subunit.

This Phocaeicola vulgatus (strain ATCC 8482 / DSM 1447 / JCM 5826 / CCUG 4940 / NBRC 14291 / NCTC 11154) (Bacteroides vulgatus) protein is Large ribosomal subunit protein bL31B.